A 451-amino-acid chain; its full sequence is UDP-N-acetylmuramoylalanine--D-glutamate ligase (451 aa).

119 to 125 (GSNGKTT) is an ATP binding site.

It belongs to the MurCDEF family.

It is found in the cytoplasm. It carries out the reaction UDP-N-acetyl-alpha-D-muramoyl-L-alanine + D-glutamate + ATP = UDP-N-acetyl-alpha-D-muramoyl-L-alanyl-D-glutamate + ADP + phosphate + H(+). Its pathway is cell wall biogenesis; peptidoglycan biosynthesis. Functionally, cell wall formation. Catalyzes the addition of glutamate to the nucleotide precursor UDP-N-acetylmuramoyl-L-alanine (UMA). This Streptococcus agalactiae serotype Ia (strain ATCC 27591 / A909 / CDC SS700) protein is UDP-N-acetylmuramoylalanine--D-glutamate ligase.